Consider the following 346-residue polypeptide: Uroporphyrinogen decarboxylase (346 aa).

Substrate contacts are provided by residues 21 to 25 (RQAGR), phenylalanine 40, aspartate 71, tyrosine 146, serine 201, and histidine 316.

Belongs to the uroporphyrinogen decarboxylase family. In terms of assembly, homodimer.

The protein localises to the cytoplasm. The catalysed reaction is uroporphyrinogen III + 4 H(+) = coproporphyrinogen III + 4 CO2. The protein operates within porphyrin-containing compound metabolism; protoporphyrin-IX biosynthesis; coproporphyrinogen-III from 5-aminolevulinate: step 4/4. Its function is as follows. Catalyzes the decarboxylation of four acetate groups of uroporphyrinogen-III to yield coproporphyrinogen-III. The sequence is that of Uroporphyrinogen decarboxylase from Rickettsia conorii (strain ATCC VR-613 / Malish 7).